A 223-amino-acid chain; its full sequence is Putative N-acetylmannosamine-6-phosphate 2-epimerase (223 aa).

Belongs to the NanE family.

The enzyme catalyses an N-acyl-D-glucosamine 6-phosphate = an N-acyl-D-mannosamine 6-phosphate. The protein operates within amino-sugar metabolism; N-acetylneuraminate degradation; D-fructose 6-phosphate from N-acetylneuraminate: step 3/5. In terms of biological role, converts N-acetylmannosamine-6-phosphate (ManNAc-6-P) to N-acetylglucosamine-6-phosphate (GlcNAc-6-P). In Clostridioides difficile (strain 630) (Peptoclostridium difficile), this protein is Putative N-acetylmannosamine-6-phosphate 2-epimerase.